Reading from the N-terminus, the 312-residue chain is tRNA uridine(34) hydroxylase (312 aa).

One can recognise a Rhodanese domain in the interval 130–225; that stretch reads RGDDVVFFDG…YGEKYGNDGL (96 aa). Catalysis depends on Cys185, which acts as the Cysteine persulfide intermediate.

Belongs to the TrhO family.

It catalyses the reaction uridine(34) in tRNA + AH2 + O2 = 5-hydroxyuridine(34) in tRNA + A + H2O. Functionally, catalyzes oxygen-dependent 5-hydroxyuridine (ho5U) modification at position 34 in tRNAs. The sequence is that of tRNA uridine(34) hydroxylase from Corynebacterium diphtheriae (strain ATCC 700971 / NCTC 13129 / Biotype gravis).